The following is a 78-amino-acid chain: Large ribosomal subunit protein bL28 (78 aa).

The tract at residues 1–30 (MAAHCQVTGAGPGFGHSISHSHRRTKRRFD) is disordered.

The protein belongs to the bacterial ribosomal protein bL28 family.

The chain is Large ribosomal subunit protein bL28 from Micrococcus luteus (strain ATCC 4698 / DSM 20030 / JCM 1464 / CCM 169 / CCUG 5858 / IAM 1056 / NBRC 3333 / NCIMB 9278 / NCTC 2665 / VKM Ac-2230) (Micrococcus lysodeikticus).